The primary structure comprises 227 residues: Lipoprotein-releasing system ATP-binding protein LolD (227 aa).

The region spanning 7–227 (LSCRNLGKSY…RLEGGRLVEA (221 aa)) is the ABC transporter domain. An ATP-binding site is contributed by 43 to 50 (GTSGSGKS).

Belongs to the ABC transporter superfamily. Lipoprotein translocase (TC 3.A.1.125) family. As to quaternary structure, the complex is composed of two ATP-binding proteins (LolD) and two transmembrane proteins (LolC and LolE).

The protein resides in the cell inner membrane. Part of the ABC transporter complex LolCDE involved in the translocation of mature outer membrane-directed lipoproteins, from the inner membrane to the periplasmic chaperone, LolA. Responsible for the formation of the LolA-lipoprotein complex in an ATP-dependent manner. The sequence is that of Lipoprotein-releasing system ATP-binding protein LolD from Pseudomonas syringae pv. tomato (strain ATCC BAA-871 / DC3000).